We begin with the raw amino-acid sequence, 676 residues long: Probable potassium transport system protein Kup (676 aa).

The next 12 membrane-spanning stretches (helical) occupy residues Gly-14–Met-34, Ile-56–Leu-76, Ala-97–Leu-117, Val-142–Ile-162, Ala-173–Ile-193, Ala-219–Ser-239, Ser-252–Leu-272, Leu-296–Gly-316, Ile-345–Phe-365, Gly-376–Leu-396, Leu-402–Ser-422, and Gly-429–Phe-449.

The protein belongs to the HAK/KUP transporter (TC 2.A.72) family.

The protein resides in the cell membrane. It catalyses the reaction K(+)(in) + H(+)(in) = K(+)(out) + H(+)(out). Transport of potassium into the cell. Likely operates as a K(+):H(+) symporter. The protein is Probable potassium transport system protein Kup of Lactobacillus delbrueckii subsp. bulgaricus (strain ATCC BAA-365 / Lb-18).